The primary structure comprises 379 residues: Carbamoyl phosphate synthase small chain (379 aa).

A CPSase region spans residues 1-189 (MSKLALLVLE…GLPEAKDDSE (189 aa)). L-glutamine contacts are provided by Ser47, Gly241, and Gly243. The Glutamine amidotransferase type-1 domain occupies 193-379 (HVVAYDFGAK…FIELIKKHSA (187 aa)). The Nucleophile role is filled by Cys269. L-glutamine is bound by residues Leu270, Gln273, Asn311, Gly313, and Phe314. Active-site residues include His353 and Glu355.

Belongs to the CarA family. In terms of assembly, composed of two chains; the small (or glutamine) chain promotes the hydrolysis of glutamine to ammonia, which is used by the large (or ammonia) chain to synthesize carbamoyl phosphate. Tetramer of heterodimers (alpha,beta)4.

The catalysed reaction is hydrogencarbonate + L-glutamine + 2 ATP + H2O = carbamoyl phosphate + L-glutamate + 2 ADP + phosphate + 2 H(+). It carries out the reaction L-glutamine + H2O = L-glutamate + NH4(+). It functions in the pathway amino-acid biosynthesis; L-arginine biosynthesis; carbamoyl phosphate from bicarbonate: step 1/1. It participates in pyrimidine metabolism; UMP biosynthesis via de novo pathway; (S)-dihydroorotate from bicarbonate: step 1/3. Functionally, small subunit of the glutamine-dependent carbamoyl phosphate synthetase (CPSase). CPSase catalyzes the formation of carbamoyl phosphate from the ammonia moiety of glutamine, carbonate, and phosphate donated by ATP, constituting the first step of 2 biosynthetic pathways, one leading to arginine and/or urea and the other to pyrimidine nucleotides. The small subunit (glutamine amidotransferase) binds and cleaves glutamine to supply the large subunit with the substrate ammonia. This chain is Carbamoyl phosphate synthase small chain, found in Vibrio parahaemolyticus serotype O3:K6 (strain RIMD 2210633).